Here is an 89-residue protein sequence, read N- to C-terminus: Small ribosomal subunit protein uS15 (89 aa).

The protein belongs to the universal ribosomal protein uS15 family. As to quaternary structure, part of the 30S ribosomal subunit. Forms a bridge to the 50S subunit in the 70S ribosome, contacting the 23S rRNA.

Functionally, one of the primary rRNA binding proteins, it binds directly to 16S rRNA where it helps nucleate assembly of the platform of the 30S subunit by binding and bridging several RNA helices of the 16S rRNA. Its function is as follows. Forms an intersubunit bridge (bridge B4) with the 23S rRNA of the 50S subunit in the ribosome. This Shouchella clausii (strain KSM-K16) (Alkalihalobacillus clausii) protein is Small ribosomal subunit protein uS15.